Consider the following 281-residue polypeptide: uncharacterized protein (281 aa).

Its subcellular location is the plastid. The protein localises to the chloroplast. This is an uncharacterized protein from Euglena gracilis.